The chain runs to 96 residues: Integration host factor subunit beta (96 aa).

This sequence belongs to the bacterial histone-like protein family. Heterodimer of an alpha and a beta chain.

This protein is one of the two subunits of integration host factor, a specific DNA-binding protein that functions in genetic recombination as well as in transcriptional and translational control. The polypeptide is Integration host factor subunit beta (Photobacterium profundum (strain SS9)).